The following is a 365-amino-acid chain: Chorismate synthase (365 aa).

Arginine 48 is a binding site for NADP(+). FMN is bound by residues 130 to 132 (RSS), 242 to 243 (NA), glycine 290, 305 to 309 (KPTSS), and arginine 331.

Belongs to the chorismate synthase family. As to quaternary structure, homotetramer. It depends on FMNH2 as a cofactor.

It catalyses the reaction 5-O-(1-carboxyvinyl)-3-phosphoshikimate = chorismate + phosphate. The protein operates within metabolic intermediate biosynthesis; chorismate biosynthesis; chorismate from D-erythrose 4-phosphate and phosphoenolpyruvate: step 7/7. Functionally, catalyzes the anti-1,4-elimination of the C-3 phosphate and the C-6 proR hydrogen from 5-enolpyruvylshikimate-3-phosphate (EPSP) to yield chorismate, which is the branch point compound that serves as the starting substrate for the three terminal pathways of aromatic amino acid biosynthesis. This reaction introduces a second double bond into the aromatic ring system. In Erythrobacter litoralis (strain HTCC2594), this protein is Chorismate synthase.